Consider the following 286-residue polypeptide: 2-hydroxy-6-oxo-6-phenylhexa-2,4-dienoate hydrolase (286 aa).

Residues 42–43 (GG), asparagine 51, lysine 111, serine 180, and arginine 190 each bind substrate. In terms of domain architecture, AB hydrolase-1 spans 173-271 (NVFLFDQSLI…RCVHWAQWEH (99 aa)). Histidine 265 (proton acceptor) is an active-site residue. Tryptophan 266 is a substrate binding site.

This sequence belongs to the AB hydrolase superfamily. BphD family. As to quaternary structure, homodimer.

The enzyme catalyses 2,6-dioxo-6-phenylhexa-3-enoate + H2O = 2-oxopent-4-enoate + benzoate + H(+). The protein operates within xenobiotic degradation; biphenyl degradation; 2-hydroxy-2,4-pentadienoate and benzoate from biphenyl: step 4/4. Catalyzes an unusual C-C bond hydrolysis of 2-hydroxy-6-oxo-6-phenylhexa-2,4-dienoic acid (HOPDA) to produce benzoic acid and 2-hydroxy-2,4-pentadienoic acid (HPD). This is 2-hydroxy-6-oxo-6-phenylhexa-2,4-dienoate hydrolase from Delftia acidovorans (Pseudomonas acidovorans).